We begin with the raw amino-acid sequence, 698 residues long: Adhesion G protein-coupled receptor F4 (698 aa).

The first 19 residues, 1–19 (MKPWIAMVCCLVFFLTTEC), serve as a signal peptide directing secretion. Residues 20-409 (SHSKPKTHRK…VKNTILNHIT (390 aa)) are Extracellular-facing. N-linked (GlcNAc...) asparagine glycosylation is found at N61, N168, N213, N268, N290, N344, and N375. One can recognise a GAIN-B domain in the interval 250-401 (RISHSSSEHS…SILMSSKPVK (152 aa)). 2 disulfide bridges follow: C353–C380 and C368–C382. The tract at residues 353–401 (CVSWDPATGQWDESPCTVMSDINSTVKCRCRHTKAVTSFSILMSSKPVK) is GPS. The chain crosses the membrane as a helical span at residues 410–430 (FIGLSISIFSLVLCLVIEAIV). Over 431–444 (WSRVVVTEISYMRH) the chain is Cytoplasmic. Residues 445–465 (VCIVNIAVSLLTANVWFIIGS) form a helical membrane-spanning segment. N-linked (GlcNAc...) asparagine glycosylation occurs at N466. At 466 to 486 (NFSANVQEDHKWCVAVTFLCH) the chain is on the extracellular side. A helical transmembrane segment spans residues 487-507 (FFFLSLFFWMLFKALLIVYGI). Over 508 to 518 (LVVFRRMMKSR) the chain is Cytoplasmic. The chain crosses the membrane as a helical span at residues 519-539 (MMAIGFAIGYGCPLVIAVITV). The Extracellular segment spans residues 540–566 (TVTEPGEGYTRKDACWLNWNQTKALFA). Residue N559 is glycosylated (N-linked (GlcNAc...) asparagine). Residues 567-587 (FAIPALAIVAVNLLVVLAVAI) traverse the membrane as a helical segment. The Cytoplasmic portion of the chain corresponds to 588–611 (NTQRPLIGSSKSQDMAIVFRISKN). A helical membrane pass occupies residues 612–632 (VAILTPLLGLTWGFGLTTLLE). Topologically, residues 633–635 (GVH) are extracellular. A helical membrane pass occupies residues 636-656 (LVFHIIFALLNAFQGFFILLF). At 657 to 698 (GTIMDHKIRDALRMRVSSLKGKSRAAEKVSLSPANGSRILNR) the chain is on the cytoplasmic side.

It belongs to the G-protein coupled receptor 2 family. Adhesion G-protein coupled receptor (ADGR) subfamily. In terms of tissue distribution, expressed in squamous epithelia.

It localises to the membrane. Its function is as follows. Orphan receptor. This is Adhesion G protein-coupled receptor F4 (Adgrf4) from Mus musculus (Mouse).